A 324-amino-acid polypeptide reads, in one-letter code: Beta-ketoacyl-[acyl-carrier-protein] synthase III (324 aa).

Active-site residues include Cys-112 and His-250. The ACP-binding stretch occupies residues 251–255 (QANIR). Asn-280 is a catalytic residue.

The protein belongs to the thiolase-like superfamily. FabH family. In terms of assembly, homodimer.

The protein localises to the cytoplasm. The enzyme catalyses malonyl-[ACP] + acetyl-CoA + H(+) = 3-oxobutanoyl-[ACP] + CO2 + CoA. Its pathway is lipid metabolism; fatty acid biosynthesis. Its function is as follows. Catalyzes the condensation reaction of fatty acid synthesis by the addition to an acyl acceptor of two carbons from malonyl-ACP. Catalyzes the first condensation reaction which initiates fatty acid synthesis and may therefore play a role in governing the total rate of fatty acid production. Possesses both acetoacetyl-ACP synthase and acetyl transacylase activities. Its substrate specificity determines the biosynthesis of branched-chain and/or straight-chain of fatty acids. This is Beta-ketoacyl-[acyl-carrier-protein] synthase III from Clostridium novyi (strain NT).